The following is an 800-amino-acid chain: Cell division cycle 5-like protein (800 aa).

2 consecutive HTH myb-type domains span residues 1–56 (MRNV…DPSI) and 57–106 (KKTE…DEVQ). 2 consecutive DNA-binding regions (H-T-H motif) follow at residues 29–52 (WARISSLLTRKSPAQCKARWHEWL) and 80–102 (WKTIAPLVGRTASQCLERYNRLL). Disordered stretches follow at residues 109–186 (QDNE…KRKF), 334–378 (YEKL…NIRT), 399–445 (QTPL…KQSL), and 571–610 (NKTFPNDSITPSSTFDDDDDDDNHHHHHDDIDNNSINDND). Gly residues predominate over residues 113 to 122 (NGGGSGGGGT). Basic and acidic residues predominate over residues 133 to 142 (NDPRRLRMGD). A compositionally biased stretch (gly residues) spans 340–351 (SGSGGGSGGVGV). Positions 361–376 (TASISSTAANNNTNNI) are enriched in low complexity. Composition is skewed to polar residues over residues 409 to 445 (NVSQTPLPKSVNNSTPFRTPNPLANQTPTQHNKKQSL) and 573 to 584 (TFPNDSITPSST). Residues 592-601 (DNHHHHHDDI) show a composition bias toward basic and acidic residues. Coiled-coil stretches lie at residues 621–700 (NTEL…KIKN) and 748–800 (VALK…LSIF).

The protein belongs to the CEF1 family. As to quaternary structure, component of the precatalytic, catalytic and postcatalytic spliceosome complexes.

Its subcellular location is the nucleus. It localises to the cytoplasm. Its function is as follows. DNA-binding protein involved in cell cycle control. May act as a transcription activator. Plays a role in pre-mRNA splicing as core component of precatalytic, catalytic and postcatalytic spliceosomal complexes. May also play a role in the response to DNA damage (DDR). This Dictyostelium discoideum (Social amoeba) protein is Cell division cycle 5-like protein (cdc5l).